A 119-amino-acid chain; its full sequence is FAD-linked sulfhydryl oxidase (119 aa).

The 97-residue stretch at 1 to 97 folds into the ERV/ALR sulfhydryl oxidase domain; it reads MLHWGPKFWR…ISWSEYKNIY (97 aa). Cysteine 44 and cysteine 47 are joined by a disulfide.

Belongs to the asfivirus B119L family. Interacts with A151R. It depends on FAD as a cofactor.

Its subcellular location is the host cytoplasm. The protein resides in the virion. The enzyme catalyses 2 R'C(R)SH + O2 = R'C(R)S-S(R)CR' + H2O2. Functionally, FAD-dependent sulfhydryl oxidase that catalyzes the formation of disulfide bonds in viral proteins produced in the cell cytoplasm. Involved in virion maturation. This chain is FAD-linked sulfhydryl oxidase, found in Ornithodoros (relapsing fever ticks).